A 777-amino-acid polypeptide reads, in one-letter code: MVRTKSSSSSASSSSQKSPIKSNNGAGGGGSSSSHRQSHRTSIDERKSSSHAHSNNSNVSSSSRRAATATSGSSSPEGDDDTTTDDLTPTGSSPRSCNGRGHSSVHKQNLYVVSFPIIFLFNVLRSLIYQLFCIFRYLYGASTKVLYRPHRRDCNIEIVVQNSKEQQLQLQQHQHNQTLSYSLETGGVSGGSGGEQQVQVQPQRIRALQPLEMATNRPGGGYSPGPGDPLLAKQKHHHRRAFEYISKALKIDEENEGHKELAIELYRKGIKELEDGIAVDCWNGRGDVWDRAQRLHDKMQTNLSMARDRLHFLALREEDLQMQRLSLKEKQPAPKQPQRSQTKDPVKQPMLTSLNADPVKMKVRSSGYGPKQNGTSSSRPAPSGQTATGASGRKLTVGTKRPGNLPVTNKSQTLPRNLGSKTTVGAVQRQPAKTAATPPAVRRQFSSGRNTPPQRSRTPINNNASSGSGASTPMVSVKGVEQKLVQLILDEIVEGGAKVEWTDIAGQDVAKQALQEMVILPSVRPELFTGLRAPAKGLLLFGPPGNGKTLLARAVATECSATFLNISAASLTSKYVGDGEKLVRALFAVARHMQPSIIFIDEVDSLLSERSSNEHEASRRLKTEFLVEFDGLPGNPDGDRIVVLAATNRPQELDEAALRRFTKRVYVSLPDEQTRELLLNRLLQKQGSPLDTEALRRLAKITEGYSGSDLTALAKDAALEPIRELNVEQVKCLDISAMRPITEKDFHNSLKRIRRSVAPQSLNSYEKWSQDYGDITI.

Composition is skewed to low complexity over residues 1 to 24 (MVRT…KSNN), 51 to 76 (HAHS…SSSP), and 85 to 94 (DDLTPTGSSP). Residues 1–103 (MVRTKSSSSS…PRSCNGRGHS (103 aa)) are disordered. The Cytoplasmic portion of the chain corresponds to 1–116 (MVRTKSSSSS…KQNLYVVSFP (116 aa)). A required for localization to punctate cytoplasmic foci region spans residues 1 to 215 (MVRTKSSSSS…RALQPLEMAT (215 aa)). The segment at residues 117–137 (IIFLFNVLRSLIYQLFCIFRY) is an intramembrane region (helical). Residues 138–777 (LYGASTKVLY…WSQDYGDITI (640 aa)) are Cytoplasmic-facing. The sufficient for interaction with microtubules and microtubule severing stretch occupies residues 213-777 (MATNRPGGGY…WSQDYGDITI (565 aa)). The region spanning 238-313 (HRRAFEYISK…SMARDRLHFL (76 aa)) is the MIT domain. Residues 327 to 474 (LKEKQPAPKQ…SSGSGASTPM (148 aa)) form a disordered region. 3 stretches are compositionally biased toward polar residues: residues 372–389 (QNGT…TATG), 406–425 (PVTN…TTVG), and 444–460 (QFSS…RTPI). Residues 461–471 (NNNASSGSGAS) show a composition bias toward low complexity. A required for interaction with microtubules region spans residues 462–474 (NNASSGSGASTPM). 542-549 (GPPGNGKT) serves as a coordination point for ATP.

This sequence belongs to the AAA ATPase family. Spastin subfamily. In terms of assembly, homohexamer. The homohexamer is stabilized by ATP-binding. The homohexamer may adopt a ring conformation through which microtubules pass prior to being severed. Interacts with microtubules. Interacts with atl; may be involved in microtubule dynamics.

It is found in the membrane. The protein localises to the cytoplasm. Its subcellular location is the cytoskeleton. The protein resides in the microtubule organizing center. It localises to the centrosome. It is found in the chromosome. The protein localises to the lipid droplet. It catalyses the reaction n ATP + n H2O + a microtubule = n ADP + n phosphate + (n+1) alpha/beta tubulin heterodimers.. Functionally, ATP-dependent microtubule severing protein. Stimulates microtubule minus-end depolymerization and poleward microtubule flux in the mitotic spindle. Regulates microtubule stability in the neuromuscular junction synapse. Involved in lipid metabolism by regulating the size and distribution of lipid droplets. Involved in axon regeneration by regulating microtubule severing. The sequence is that of Spastin from Drosophila willistoni (Fruit fly).